We begin with the raw amino-acid sequence, 124 residues long: Small ribosomal subunit protein uS12 (124 aa).

Position 89 is a 3-methylthioaspartic acid (D89). The interval 102-124 is disordered; that stretch reads LDTSGVNNRKHGRSKYGTKRPKS. Basic residues predominate over residues 109–124; that stretch reads NRKHGRSKYGTKRPKS.

This sequence belongs to the universal ribosomal protein uS12 family. In terms of assembly, part of the 30S ribosomal subunit. Contacts proteins S8 and S17. May interact with IF1 in the 30S initiation complex.

Functionally, with S4 and S5 plays an important role in translational accuracy. In terms of biological role, interacts with and stabilizes bases of the 16S rRNA that are involved in tRNA selection in the A site and with the mRNA backbone. Located at the interface of the 30S and 50S subunits, it traverses the body of the 30S subunit contacting proteins on the other side and probably holding the rRNA structure together. The combined cluster of proteins S8, S12 and S17 appears to hold together the shoulder and platform of the 30S subunit. The polypeptide is Small ribosomal subunit protein uS12 (Francisella tularensis subsp. novicida (strain U112)).